The primary structure comprises 151 residues: MNPQRKKRLLLIVGLLVGVGVAVGFALSALQQNINLFYTPTQIANGEAPLDTRIRAGGMVEKGSVQRSADSLDVRFVVTDFNKSVPITYRGILPDLFREGQGIVALGKLNADGVVVADEVLAKHDEKYMPPEVTKALKESGQAAAGGETKP.

Residues 1–8 lie on the Cytoplasmic side of the membrane; sequence MNPQRKKR. The chain crosses the membrane as a helical; Signal-anchor for type II membrane protein span at residues 9–29; that stretch reads LLLIVGLLVGVGVAVGFALSA. Residues 30-151 are Periplasmic-facing; that stretch reads LQQNINLFYT…QAAAGGETKP (122 aa). Heme contacts are provided by histidine 124 and tyrosine 128.

It belongs to the CcmE/CycJ family.

Its subcellular location is the cell inner membrane. Functionally, heme chaperone required for the biogenesis of c-type cytochromes. Transiently binds heme delivered by CcmC and transfers the heme to apo-cytochromes in a process facilitated by CcmF and CcmH. This is Cytochrome c-type biogenesis protein CcmE from Pseudomonas putida (strain ATCC 700007 / DSM 6899 / JCM 31910 / BCRC 17059 / LMG 24140 / F1).